The chain runs to 409 residues: Torsin-4A (409 aa).

Residues 1–16 are compositionally biased toward basic and acidic residues; it reads MGEQDPSDRLRGDQLK. Disordered stretches follow at residues 1–28 and 75–99; these read MGEQDPSDRLRGDQLKEPNQNGKGSFSQ and DNLHEPVNSNPASPRKRKKKRKGRV. Residues 17–28 are compositionally biased toward polar residues; it reads EPNQNGKGSFSQ. The span at 88–98 shows a compositional bias: basic residues; it reads PRKRKKKRKGR. A helical membrane pass occupies residues 120–136; it reads CLYLLCIIVFLQVYNAI. 192–199 contributes to the ATP binding site; it reads GPTGVGKS.

Belongs to the ClpA/ClpB family. Torsin subfamily.

It localises to the membrane. The chain is Torsin-4A (tor4a) from Danio rerio (Zebrafish).